The chain runs to 3623 residues: Cubilin (3623 aa).

Residues 1 to 23 (MMNMSLPFLWSLLTLLIFAEVNG) form the signal peptide. Residues 24-35 (EAGELELQRQKR) constitute a propeptide, removed in mature form. The tract at residues 42–49 (PRMATERG) is interaction with AMN. Asn105 carries N-linked (GlcNAc...) asparagine glycosylation. Residues 132 to 168 (DKKVCSSNPCQNGGTCLNLHDSFFCICPPQWKGPLCS) enclose the EGF-like 1 domain. 9 disulfides stabilise this stretch: Cys136–Cys147, Cys141–Cys156, Cys158–Cys167, Cys174–Cys190, Cys184–Cys199, Cys201–Cys210, Cys267–Cys280, Cys274–Cys289, and Cys292–Cys303. The region spanning 170–211 (DVNECEIYSGTPLSCQNGGTCVNTMGSYSCHCPPETYGPQCA) is the EGF-like 2; calcium-binding domain. The EGF-like 3; calcium-binding domain maps to 263–304 (DRDECSFQPGPCSTLVQCFNTQGSFYCGACPTGWQGNGYICE). Residues 305–348 (DINECEINNGGCSVAPPVECVNTPGSSHCQACPPGYQGDGRVCT) form the EGF-like 4; calcium-binding domain. 2 EGF-like domains span residues 349-385 (LTDICSVSNGGCHPDASCSSTLGSLPLCTCLPGYTGN) and 395-430 (LSNICLSHPCLNGQCIDTVSGYFCKCDSGWTGVNCT). Disulfide bonds link Cys353–Cys366, Cys360–Cys376, Cys399–Cys409, Cys404–Cys418, Cys420–Cys429, Cys436–Cys447, Cys441–Cys456, Cys458–Cys467, Cys474–Cys500, Cys527–Cys549, Cys590–Cys616, Cys643–Cys665, and Cys708–Cys734. Asn428 carries N-linked (GlcNAc...) asparagine glycosylation. Residues 432-468 (NINECLSNPCLNGGTCVDGVDSFSCECTRLWTGALCQ) enclose the EGF-like 7; calcium-binding domain. CUB domains follow at residues 474-586 (CGES…WETQ), 590-702 (CGGI…YLTS), 708-816 (CGGN…YQVA), 816-928 (ACGD…FSAE), 932-1042 (CGEI…YEAI), 1048-1161 (CLQD…WDGS), 1165-1277 (CGGN…YRQT), 1278-1389 (CENV…WFVY), 1391-1506 (CGGE…WQAV), 1510-1619 (CGGI…FRQA), 1620-1734 (CGGH…VTAS), 1738-1850 (CGGT…FMKI), 1852-1963 (GNDN…WFAV), 1978-2091 (CGGF…FHKS), 2092-2213 (CGGY…YEAK), 2217-2334 (CGGN…YSIA), 2336-2448 (CGGR…FESS), 2452-2565 (CGGD…YTSS), 2570-2687 (CGGS…YSFT), 2689-2801 (CGGI…WNTQ), 2805-2919 (CGGI…FVSR), 2920-3035 (CGSN…YRII), 3037-3150 (CGGV…FRQT), 3157-3274 (CGGY…YTIM), 3278-3393 (CGGT…YQIA), 3395-3507 (CNRD…WTSS), and 3511-3623 (CGGT…TWDS). N-linked (GlcNAc...) asparagine glycosylation occurs at Asn482. N-linked (GlcNAc...) asparagine glycans are attached at residues Asn711, Asn749, Asn781, and Asn857. Disulfide bonds link Cys869–Cys891 and Cys932–Cys958. Asn957 is a glycosylation site (N-linked (GlcNAc...) asparagine). Glu980 lines the Ca(2+) pocket. N-linked (GlcNAc...) asparagine glycosylation is present at Asn984. The cysteines at positions 985 and 1005 are disulfide-linked. Residues Asp988, Asp1027, Asp1029, and Leu1030 each contribute to the Ca(2+) site. A disulfide bridge links Cys1048 with Cys1074. N-linked (GlcNAc...) asparagine glycosylation is present at Asn1092. 5 residues coordinate Ca(2+): Glu1096, Asp1105, Asp1146, Ile1148, and Asp1149. Cys1165 and Cys1191 are oxidised to a cystine. An N-linked (GlcNAc...) asparagine glycan is attached at Asn1168. Glu1213 is a binding site for Ca(2+). Asn1217 carries N-linked (GlcNAc...) asparagine glycosylation. A disulfide bridge links Cys1218 with Cys1240. Positions 1221, 1262, 1264, and 1265 each coordinate Ca(2+). An intrachain disulfide couples Cys1278 to Cys1306. Asn1285, Asn1307, and Asn1319 each carry an N-linked (GlcNAc...) asparagine glycan. Glu1328 is a binding site for Ca(2+). The N-linked (GlcNAc...) asparagine glycan is linked to Asn1332. The cysteines at positions 1333 and 1351 are disulfide-linked. The Ca(2+) site is built by Asp1336, Asp1373, and Val1375. 2 cysteine pairs are disulfide-bonded: Cys1391-Cys1417 and Cys1444-Cys1466. A glycan (N-linked (GlcNAc...) asparagine) is linked at Asn1500. The cysteines at positions 1510 and 1536 are disulfide-linked. N-linked (GlcNAc...) asparagine glycosylation is present at Asn1551. 5 cysteine pairs are disulfide-bonded: Cys1563-Cys1581, Cys1620-Cys1647, Cys1675-Cys1697, Cys1738-Cys1764, and Cys1791-Cys1812. N-linked (GlcNAc...) asparagine glycosylation is present at Asn1646. Asn1802, Asn1819, and Asn1885 each carry an N-linked (GlcNAc...) asparagine glycan. 3 cysteine pairs are disulfide-bonded: Cys1905-Cys1927, Cys1978-Cys2006, and Cys2032-Cys2054. 2 N-linked (GlcNAc...) asparagine glycosylation sites follow: Asn2085 and Asn2117. 2 cysteine pairs are disulfide-bonded: Cys2092-Cys2118 and Cys2217-Cys2247. Asn2274 carries N-linked (GlcNAc...) asparagine glycosylation. 2 cysteine pairs are disulfide-bonded: Cys2275/Cys2297 and Cys2336/Cys2363. Asn2386 and Asn2400 each carry an N-linked (GlcNAc...) asparagine glycan. Cystine bridges form between Cys2390–Cys2411, Cys2452–Cys2478, and Cys2505–Cys2527. 4 N-linked (GlcNAc...) asparagine glycosylation sites follow: Asn2531, Asn2581, Asn2592, and Asn2610. A disulfide bond links Cys2570 and Cys2599. 7 cysteine pairs are disulfide-bonded: Cys2628/Cys2649, Cys2689/Cys2715, Cys2742/Cys2764, Cys2805/Cys2831, Cys2860/Cys2883, Cys2920/Cys2946, and Cys2977/Cys2999. N-linked (GlcNAc...) asparagine glycosylation is present at Asn2813. N-linked (GlcNAc...) asparagine glycosylation is found at Asn2923 and Asn2945. Thr3008 carries the phosphothreonine modification. Cystine bridges form between Cys3037/Cys3064 and Cys3091/Cys3113. Residues Asn3042, Asn3103, Asn3125, and Asn3165 are each glycosylated (N-linked (GlcNAc...) asparagine). 2 disulfide bridges follow: Cys3157/Cys3185 and Cys3215/Cys3237. Asn3268, Asn3283, Asn3290, and Asn3295 each carry an N-linked (GlcNAc...) asparagine glycan. 2 disulfides stabilise this stretch: Cys3278–Cys3306 and Cys3332–Cys3354. The N-linked (GlcNAc...) asparagine glycan is linked to Asn3357. An intrachain disulfide couples Cys3395 to Cys3421. 4 N-linked (GlcNAc...) asparagine glycosylation sites follow: Asn3430, Asn3457, Asn3533, and Asn3576. Disulfide bonds link Cys3448-Cys3470, Cys3511-Cys3537, and Cys3564-Cys3586.

Interacts with AMN. Component of the cubam complex composed of one CUBN trimer and one AMN chain. The cubam complex can dimerize. Interacts with LRP2 in a dual-receptor complex in a calcium-dependent manner. Found in a complex with PID1/PCLI1, LRP1 and CUBNI. Interacts with LRP1 and PID1/PCLI1. Post-translationally, the precursor is cleaved by a trans-Golgi proteinase furin, removing a propeptide. In terms of processing, N-glycosylated. In terms of tissue distribution, detected in kidney cortex (at protein level). Expressed in kidney proximal tubule cells, placenta, visceral yolk-sac cells and in absorptive intestinal cells. Expressed in the epithelium of intestine and kidney.

It localises to the apical cell membrane. Its subcellular location is the cell membrane. The protein resides in the membrane. It is found in the coated pit. The protein localises to the endosome. It localises to the lysosome membrane. In terms of biological role, endocytic receptor which plays a role in lipoprotein, vitamin and iron metabolism by facilitating their uptake. Acts together with LRP2 to mediate endocytosis of high-density lipoproteins, GC, hemoglobin, ALB, TF and SCGB1A1. Acts together with AMN to mediate endocytosis of the CBLIF-cobalamin complex. Binds to ALB, MB, Kappa and lambda-light chains, TF, hemoglobin, GC, SCGB1A1, APOA1, high density lipoprotein, and the CBLIF-cobalamin complex. Ligand binding requires calcium. Serves as important transporter in several absorptive epithelia, including intestine, renal proximal tubules and embryonic yolk sac. May play an important role in the development of the peri-implantation embryo through internalization of APOA1 and cholesterol. Binds to LGALS3 at the maternal-fetal interface. The sequence is that of Cubilin (CUBN) from Homo sapiens (Human).